The primary structure comprises 88 residues: Small ribosomal subunit protein uS15 (88 aa).

Belongs to the universal ribosomal protein uS15 family. As to quaternary structure, part of the 30S ribosomal subunit. Forms a bridge to the 50S subunit in the 70S ribosome, contacting the 23S rRNA.

Functionally, one of the primary rRNA binding proteins, it binds directly to 16S rRNA where it helps nucleate assembly of the platform of the 30S subunit by binding and bridging several RNA helices of the 16S rRNA. Its function is as follows. Forms an intersubunit bridge (bridge B4) with the 23S rRNA of the 50S subunit in the ribosome. The sequence is that of Small ribosomal subunit protein uS15 from Borreliella afzelii (strain PKo) (Borrelia afzelii).